The following is a 172-amino-acid chain: Centrin-1 (172 aa).

Residues 1 to 31 (MASGFKKPSAASTGQKRKVAPKPELTEDQKQ) are disordered. 4 consecutive EF-hand domains span residues 28–63 (DQKQ…LGFE), 64–99 (PRKE…KMSE), 101–136 (DTKE…LGEN), and 137–172 (LTDE…TSLY). Aspartate 41, aspartate 43, serine 45, threonine 47, and glutamate 52 together coordinate Ca(2+). Ca(2+)-binding residues include aspartate 150, aspartate 152, aspartate 154, glutamate 156, and glutamate 161.

The protein belongs to the centrin family. Monomer. Interacts with CIMAP3. Interacts with USP49.

The protein resides in the cytoplasm. It is found in the cytoskeleton. It localises to the microtubule organizing center. The protein localises to the centrosome. Its subcellular location is the cell projection. The protein resides in the cilium. Its function is as follows. Plays a fundamental role in microtubule-organizing center structure and function. Plays a role in sperm cilia formation. This is Centrin-1 from Homo sapiens (Human).